Here is a 314-residue protein sequence, read N- to C-terminus: Protein ATP1B4 (314 aa).

Positions 1-17 (MATTAGEQANYLQSADS) are enriched in polar residues. The segment at 1–37 (MATTAGEQANYLQSADSMSDGRQHHPEEAGEKKQEEQ) is disordered. Residues 1 to 69 (MATTAGEQAN…VLGRDKKSWA (69 aa)) lie on the Cytoplasmic side of the membrane. Residues 19–37 (SDGRQHHPEEAGEKKQEEQ) show a composition bias toward basic and acidic residues. The chain crosses the membrane as a helical span at residues 70–90 (LILLFYFILYCFLAGLFALCI). Residues 91–314 (YGLLATISPY…GRVAFTLHIG (224 aa)) lie on the Extracellular side of the membrane. A disulfide bond links Cys-160 and Cys-179. N-linked (GlcNAc...) asparagine glycosylation is present at Asn-188. 2 disulfide bridges follow: Cys-189-Cys-205 and Cys-228-Cys-287. Asn-264 carries an N-linked (GlcNAc...) asparagine glycan.

This sequence belongs to the X(+)/potassium ATPases subunit beta family. In terms of assembly, composed of two subunits: alpha (catalytic) and beta (accessory). In terms of processing, glycosylated. In terms of tissue distribution, expressed in skeletal muscle, liver, lung, kidney, heart, brain and skin.

It localises to the membrane. Its function is as follows. This is the non-catalytic component of the active enzyme, which catalyzes the hydrolysis of ATP coupled with the exchange of Na(+) and K(+) ions across the plasma membrane. This chain is Protein ATP1B4 (atp1b4), found in Xenopus laevis (African clawed frog).